A 111-amino-acid chain; its full sequence is ATP-dependent Clp protease adapter protein ClpS (111 aa).

It belongs to the ClpS family. In terms of assembly, binds to the N-terminal domain of the chaperone ClpA.

Involved in the modulation of the specificity of the ClpAP-mediated ATP-dependent protein degradation. The protein is ATP-dependent Clp protease adapter protein ClpS of Corynebacterium aurimucosum (strain ATCC 700975 / DSM 44827 / CIP 107346 / CN-1) (Corynebacterium nigricans).